We begin with the raw amino-acid sequence, 403 residues long: S-adenosylmethionine synthase (403 aa).

Residue H16 coordinates ATP. D18 contacts Mg(2+). Residue E44 participates in K(+) binding. E57 and Q100 together coordinate L-methionine. The tract at residues 100 to 110 (QSPDIAQGVDR) is flexible loop. The disordered stretch occupies residues 106-126 (QGVDRSYESRSGSASTDAHDL). Residues 176–178 (DGK), 248–249 (KF), D257, 263–264 (RK), A280, and K284 contribute to the ATP site. D257 serves as a coordination point for L-methionine. K288 is a binding site for L-methionine.

Belongs to the AdoMet synthase family. In terms of assembly, homotetramer; dimer of dimers. The cofactor is Mg(2+). K(+) serves as cofactor.

It localises to the cytoplasm. The enzyme catalyses L-methionine + ATP + H2O = S-adenosyl-L-methionine + phosphate + diphosphate. The protein operates within amino-acid biosynthesis; S-adenosyl-L-methionine biosynthesis; S-adenosyl-L-methionine from L-methionine: step 1/1. Functionally, catalyzes the formation of S-adenosylmethionine (AdoMet) from methionine and ATP. The overall synthetic reaction is composed of two sequential steps, AdoMet formation and the subsequent tripolyphosphate hydrolysis which occurs prior to release of AdoMet from the enzyme. The protein is S-adenosylmethionine synthase of Clavibacter sepedonicus (Clavibacter michiganensis subsp. sepedonicus).